Reading from the N-terminus, the 503-residue chain is MEFSVKSGSPEKQRSACIVVGVFEPRRLSPIAEQLDKISDGYISALLRRGELEGKVGQTLLLHHVPNILSERILLIGCGKERELDERQYKQVIQKTINTLNDTGSMEAVCFLTELHVKGRNTYWKVRQAVETAKETLYTFDQLKSNKTEPRRPLRKMVFNVPTRRELTSGERAIQHGLAIASGIKAAKDLGNMPPNICNAAYLASQARQLADAFSTNTVTRVIGEQQMKELGMHAYLAVGHGSQNESLMSVIEYKGNPNKDAKPIVLVGKGLTFDSGGISIKPAEGMDEMKYDMCGAATVYGVMRVVAELQLPLNVVGVLAGCENMPGGRAYRPGDILTTMSGQTVEVLNTDAEGRLVLCDALTYVERFEPELVIDIATLTGACVVALGNHLTGLMSNHNPLAHELIGASEQAGDRAWRLPLGEEYYEQLDSNFADMANIGGRAGGAITAGCFLSRFTRKYSWAHLDIAGTAWRSGKNKGATGRPVALLSQFLLNRAGLNGDD.

Mn(2+) is bound by residues Lys-270 and Asp-275. Lys-282 is an active-site residue. The Mn(2+) site is built by Asp-293, Asp-352, and Glu-354. Arg-356 is an active-site residue.

This sequence belongs to the peptidase M17 family. It depends on Mn(2+) as a cofactor.

Its subcellular location is the cytoplasm. The enzyme catalyses Release of an N-terminal amino acid, Xaa-|-Yaa-, in which Xaa is preferably Leu, but may be other amino acids including Pro although not Arg or Lys, and Yaa may be Pro. Amino acid amides and methyl esters are also readily hydrolyzed, but rates on arylamides are exceedingly low.. It carries out the reaction Release of an N-terminal amino acid, preferentially leucine, but not glutamic or aspartic acids.. Its function is as follows. Presumably involved in the processing and regular turnover of intracellular proteins. Catalyzes the removal of unsubstituted N-terminal amino acids from various peptides. This chain is Probable cytosol aminopeptidase, found in Yersinia pseudotuberculosis serotype O:1b (strain IP 31758).